The sequence spans 363 residues: Mitogen-activated protein kinase 12 (363 aa).

The Protein kinase domain maps to 25–309 (YKDLKQVGTG…AAEALAFPFF (285 aa)). ATP contacts are provided by residues 31-39 (VGTGAYGTV) and lysine 54. The Proton acceptor role is filled by aspartate 151. A Phosphothreonine modification is found at threonine 181. The short motif at 181–183 (TGY) is the TXY element. Tyrosine 183 is modified (phosphotyrosine).

It belongs to the protein kinase superfamily. CMGC Ser/Thr protein kinase family. MAP kinase subfamily. Requires Mg(2+) as cofactor. In terms of processing, dually phosphorylated on Thr-181 and Tyr-183, which activates the enzyme.

Its subcellular location is the cytoplasm. It carries out the reaction L-seryl-[protein] + ATP = O-phospho-L-seryl-[protein] + ADP + H(+). The catalysed reaction is L-threonyl-[protein] + ATP = O-phospho-L-threonyl-[protein] + ADP + H(+). Its activity is regulated as follows. Activated by threonine and tyrosine phosphorylation. In terms of biological role, serine/threonine kinase which acts as an essential component of the MAP kinase signal transduction pathway. MAPK12 is one of the four p38 MAPKs which play an important role in the cascades of cellular responses evoked by extracellular stimuli such as pro-inflammatory cytokines or physical stress leading to direct activation of transcription factors. Accordingly, p38 MAPKs phosphorylate a broad range of proteins and it has been estimated that they may have approximately 200 to 300 substrates each. Some of the targets are downstream kinases such as MAPKAPK2, which are activated through phosphorylation and further phosphorylate additional targets. This chain is Mitogen-activated protein kinase 12 (mapk12), found in Danio rerio (Zebrafish).